The primary structure comprises 493 residues: Cobyric acid synthase (493 aa).

A GATase cobBQ-type domain is found at 252-441 (DLKITVIRLP…LHGLLENGPW (190 aa)). Cys-333 acts as the Nucleophile in catalysis. His-433 is a catalytic residue.

The protein belongs to the CobB/CobQ family. CobQ subfamily.

It functions in the pathway cofactor biosynthesis; adenosylcobalamin biosynthesis. Functionally, catalyzes amidations at positions B, D, E, and G on adenosylcobyrinic A,C-diamide. NH(2) groups are provided by glutamine, and one molecule of ATP is hydrogenolyzed for each amidation. This chain is Cobyric acid synthase, found in Thermosynechococcus vestitus (strain NIES-2133 / IAM M-273 / BP-1).